The primary structure comprises 210 residues: Peptidyl-tRNA hydrolase (210 aa).

Y30 contributes to the tRNA binding site. The Proton acceptor role is filled by H35. TRNA is bound by residues Y81, N83, and N129.

Belongs to the PTH family. As to quaternary structure, monomer.

The protein localises to the cytoplasm. The catalysed reaction is an N-acyl-L-alpha-aminoacyl-tRNA + H2O = an N-acyl-L-amino acid + a tRNA + H(+). Functionally, hydrolyzes ribosome-free peptidyl-tRNAs (with 1 or more amino acids incorporated), which drop off the ribosome during protein synthesis, or as a result of ribosome stalling. Catalyzes the release of premature peptidyl moieties from peptidyl-tRNA molecules trapped in stalled 50S ribosomal subunits, and thus maintains levels of free tRNAs and 50S ribosomes. This Bordetella petrii (strain ATCC BAA-461 / DSM 12804 / CCUG 43448) protein is Peptidyl-tRNA hydrolase.